Here is a 556-residue protein sequence, read N- to C-terminus: Formate--tetrahydrofolate ligase (556 aa).

65–72 (TPAGEGKS) lines the ATP pocket.

The protein belongs to the formate--tetrahydrofolate ligase family.

It carries out the reaction (6S)-5,6,7,8-tetrahydrofolate + formate + ATP = (6R)-10-formyltetrahydrofolate + ADP + phosphate. The protein operates within one-carbon metabolism; tetrahydrofolate interconversion. This is Formate--tetrahydrofolate ligase from Streptococcus equi subsp. zooepidemicus (strain MGCS10565).